The chain runs to 349 residues: Peptide chain release factor 1 (349 aa).

Gln233 is modified (N5-methylglutamine).

The protein belongs to the prokaryotic/mitochondrial release factor family. Methylated by PrmC. Methylation increases the termination efficiency of RF1.

It localises to the cytoplasm. Peptide chain release factor 1 directs the termination of translation in response to the peptide chain termination codons UAG and UAA. The protein is Peptide chain release factor 1 of Pelotomaculum thermopropionicum (strain DSM 13744 / JCM 10971 / SI).